A 434-amino-acid chain; its full sequence is Maintenance of mitochondrial morphology protein 1 (434 aa).

The Lumenal segment spans residues 1-105 (MEMSELLASE…SFSSQSFAEG (105 aa)). The chain crosses the membrane as a helical span at residues 106–126 (LIVGQLSVIVALIFVIKFFVF). At 127–434 (SEGGTKTATA…DDSVSVKSND (308 aa)) the chain is on the cytoplasmic side. The region spanning 194–408 (SPESLDWFNV…EPRFQFVKLP (215 aa)) is the SMP-LTD domain. The segment at 415–434 (KNTRKEKTDTDDSVSVKSND) is disordered.

It belongs to the MMM1 family. Homodimer. Component of the ER-mitochondria encounter structure (ERMES) or MDM complex, composed of MMM1, MDM10, MDM12 and MDM34. An MMM1 homodimer associates with one molecule of MDM12 on each side in a pairwise head-to-tail manner, and the SMP-LTD domains of MMM1 and MDM12 generate a continuous hydrophobic tunnel for phospholipid trafficking.

It localises to the endoplasmic reticulum membrane. Component of the ERMES/MDM complex, which serves as a molecular tether to connect the endoplasmic reticulum (ER) and mitochondria. Components of this complex are involved in the control of mitochondrial shape and protein biogenesis, and function in nonvesicular lipid trafficking between the ER and mitochondria. The MDM12-MMM1 subcomplex functions in the major beta-barrel assembly pathway that is responsible for biogenesis of all outer membrane beta-barrel proteins, and acts in a late step after the SAM complex. The MDM10-MDM12-MMM1 subcomplex further acts in the TOM40-specific pathway after the action of the MDM12-MMM1 complex. Essential for establishing and maintaining the structure of mitochondria and maintenance of mtDNA nucleoids. The sequence is that of Maintenance of mitochondrial morphology protein 1 from Kluyveromyces lactis (strain ATCC 8585 / CBS 2359 / DSM 70799 / NBRC 1267 / NRRL Y-1140 / WM37) (Yeast).